A 367-amino-acid chain; its full sequence is Chorismate synthase (367 aa).

The interval 39-60 is disordered; sequence EEFSHDLQRRASGKSRHTSARR. NADP(+)-binding residues include Arg48 and Arg54. FMN-binding positions include 125–127, 238–239, Gly278, 293–297, and Arg319; these read RSS, NA, and KPTSS.

It belongs to the chorismate synthase family. In terms of assembly, homotetramer. FMNH2 serves as cofactor.

It catalyses the reaction 5-O-(1-carboxyvinyl)-3-phosphoshikimate = chorismate + phosphate. Its pathway is metabolic intermediate biosynthesis; chorismate biosynthesis; chorismate from D-erythrose 4-phosphate and phosphoenolpyruvate: step 7/7. In terms of biological role, catalyzes the anti-1,4-elimination of the C-3 phosphate and the C-6 proR hydrogen from 5-enolpyruvylshikimate-3-phosphate (EPSP) to yield chorismate, which is the branch point compound that serves as the starting substrate for the three terminal pathways of aromatic amino acid biosynthesis. This reaction introduces a second double bond into the aromatic ring system. The sequence is that of Chorismate synthase from Xanthomonas oryzae pv. oryzae (strain MAFF 311018).